The sequence spans 30 residues: NLYQFGGMIGCANKGTRSWLSYVNYGCYCG.

Ca(2+) contacts are provided by Y28 and G30.

Ca(2+) is required as a cofactor. In terms of processing, contains seven disulfide bonds. As to expression, expressed by the venom gland.

It is found in the secreted. The catalysed reaction is a 1,2-diacyl-sn-glycero-3-phosphocholine + H2O = a 1-acyl-sn-glycero-3-phosphocholine + a fatty acid + H(+). In terms of biological role, snake venom phospholipase A2 (PLA2) that has myotoxic activity but no significant neurotoxicity. PLA2 catalyzes the calcium-dependent hydrolysis of the 2-acyl groups in 3-sn-phosphoglycerides. This Acanthophis sp. (strain Seram) (Seram death adder) protein is Phospholipase A2 acanmyotoxin-2.